Here is a 271-residue protein sequence, read N- to C-terminus: 4-hydroxy-tetrahydrodipicolinate reductase (271 aa).

Residues 11–16 and Glu-37 contribute to the NAD(+) site; that span reads GGSGRM. Arg-38 is a binding site for NADP(+). Residues 101–103 and 125–128 contribute to the NAD(+) site; these read GTT and APNM. The active-site Proton donor/acceptor is His-158. His-159 serves as a coordination point for (S)-2,3,4,5-tetrahydrodipicolinate. Lys-162 serves as the catalytic Proton donor. Position 168 to 169 (168 to 169) interacts with (S)-2,3,4,5-tetrahydrodipicolinate; it reads GT.

The protein belongs to the DapB family.

Its subcellular location is the cytoplasm. It carries out the reaction (S)-2,3,4,5-tetrahydrodipicolinate + NAD(+) + H2O = (2S,4S)-4-hydroxy-2,3,4,5-tetrahydrodipicolinate + NADH + H(+). It catalyses the reaction (S)-2,3,4,5-tetrahydrodipicolinate + NADP(+) + H2O = (2S,4S)-4-hydroxy-2,3,4,5-tetrahydrodipicolinate + NADPH + H(+). It participates in amino-acid biosynthesis; L-lysine biosynthesis via DAP pathway; (S)-tetrahydrodipicolinate from L-aspartate: step 4/4. Functionally, catalyzes the conversion of 4-hydroxy-tetrahydrodipicolinate (HTPA) to tetrahydrodipicolinate. The protein is 4-hydroxy-tetrahydrodipicolinate reductase of Shewanella halifaxensis (strain HAW-EB4).